A 62-amino-acid chain; its full sequence is Large ribosomal subunit protein bL28 (62 aa).

This sequence belongs to the bacterial ribosomal protein bL28 family.

The protein is Large ribosomal subunit protein bL28 of Onion yellows phytoplasma (strain OY-M).